Consider the following 35-residue polypeptide: Leukocyte cysteine proteinase inhibitor 2 (35 aa).

The tract at residues 1–35 (LAGGLTEPRPADTEIQEIANKVKPQLEEKTNKKYD) is disordered. Residues 24–35 (PQLEEKTNKKYD) are compositionally biased toward basic and acidic residues.

Belongs to the cystatin family.

It localises to the cytoplasm. Its function is as follows. Potent inhibitor of cathepsins L and S, and papain. In Sus scrofa (Pig), this protein is Leukocyte cysteine proteinase inhibitor 2.